The following is a 120-amino-acid chain: Holo-[acyl-carrier-protein] synthase (120 aa).

Positions 8 and 58 each coordinate Mg(2+).

Belongs to the P-Pant transferase superfamily. AcpS family. Mg(2+) is required as a cofactor.

The protein resides in the cytoplasm. It carries out the reaction apo-[ACP] + CoA = holo-[ACP] + adenosine 3',5'-bisphosphate + H(+). Functionally, transfers the 4'-phosphopantetheine moiety from coenzyme A to a Ser of acyl-carrier-protein. In Anoxybacillus flavithermus (strain DSM 21510 / WK1), this protein is Holo-[acyl-carrier-protein] synthase.